We begin with the raw amino-acid sequence, 142 residues long: Salivary protein 15b (142 aa).

The first 20 residues, 1–20 (MKYLGLALISAVFLIGTCQA), serve as a signal peptide directing secretion. 3 cysteine pairs are disulfide-bonded: C27-C44, C40-C108, and C91-C117.

This sequence belongs to the PBP/GOBP family. In terms of tissue distribution, female salivary gland.

It is found in the secreted. Functionally, inhibits contact coagulation pathway activation in the host by sequestering anionic polymers, such as dextran sulfate and heparin, and thus blocking interaction of protein components of the pathway with negatively charged surfaces. Inhibits dextran sulfate-mediated autoactivation of host coagulation factor XII (F12). Inhibits dextran sulfate-mediated activation of host factor XI (F11) by activated F12. Inhibits polyphosphate-induced plasma extravasation at the injection site in mouse model, probably via inhibition of bradykinin generation in host skin. The polypeptide is Salivary protein 15b (Phlebotomus duboscqi (Sandfly)).